The chain runs to 487 residues: mRNA cleavage and polyadenylation factor CLP1 (487 aa).

ATP contacts are provided by residues glutamate 19, lysine 59, and asparagine 134–threonine 139.

This sequence belongs to the Clp1 family. Clp1 subfamily. As to quaternary structure, component of a pre-mRNA cleavage factor complex. Interacts directly with PCF11.

It is found in the nucleus. Its function is as follows. Required for endonucleolytic cleavage during polyadenylation-dependent pre-mRNA 3'-end formation. In Laccaria bicolor (strain S238N-H82 / ATCC MYA-4686) (Bicoloured deceiver), this protein is mRNA cleavage and polyadenylation factor CLP1.